Consider the following 464-residue polypeptide: GDNF family receptor alpha-2 (464 aa).

Residues 1–21 (MILANVFCLFFFLDETLRSLA) form the signal peptide. 11 cysteine pairs are disulfide-bonded: Cys-40–Cys-93, Cys-95–Cys-105, Cys-161–Cys-222, Cys-168–Cys-174, Cys-185–Cys-200, Cys-195–Cys-241, Cys-224–Cys-229, Cys-251–Cys-323, Cys-258–Cys-264, Cys-275–Cys-293, and Cys-285–Cys-347. N-linked (GlcNAc...) asparagine glycosylation is present at Asn-52. N-linked (GlcNAc...) asparagine glycosylation occurs at Asn-357. Positions 363–392 (VSPKGPSFQATQAPRVEKTPSLPDDLSDST) are disordered. Residues 381 to 392 (TPSLPDDLSDST) show a composition bias toward low complexity. Residue Asn-413 is glycosylated (N-linked (GlcNAc...) asparagine). A lipid anchor (GPI-anchor amidated serine) is attached at Ser-444. A propeptide spans 445 to 464 (RARPSAALTVLSVLMLKLAL) (removed in mature form).

This sequence belongs to the GDNFR family. Interacts with NRTN ligand and RET: forms a 2:2:2 ternary complex composed of NRTN ligand, GFRA2 and RET receptor. Also forms a 4:4:4 tetrameric complex composed of 4 copies of NRTN ligand, GFRA2 and RET receptor, which prevents endocytosis of RET. Interacts with SORL1. In terms of tissue distribution, found in both brain and placenta.

The protein localises to the cell membrane. Receptor for neurturin (NRTN), a growth factor that supports the survival of sympathetic neurons. NRTN-binding leads to autophosphorylation and activation of the RET receptor. Also able to mediate GDNF signaling through the RET tyrosine kinase receptor. In terms of biological role, participates in NRTN-induced 'Ser-727' phosphorylation of STAT3. The sequence is that of GDNF family receptor alpha-2 (GFRA2) from Homo sapiens (Human).